The sequence spans 356 residues: Dihydroorotate dehydrogenase (quinone) (356 aa).

Residues 66–70 (AGFDK) and T90 contribute to the FMN site. Residue K70 participates in substrate binding. Position 115–119 (115–119 (NRMGF)) interacts with substrate. Residues N143 and N176 each coordinate FMN. N176 is a binding site for substrate. S179 functions as the Nucleophile in the catalytic mechanism. Position 181 (N181) interacts with substrate. The FMN site is built by K212 and T240. Position 241–242 (241–242 (NT)) interacts with substrate. Residues G266, G295, and 316-317 (YT) contribute to the FMN site.

Belongs to the dihydroorotate dehydrogenase family. Type 2 subfamily. In terms of assembly, monomer. The cofactor is FMN.

It localises to the cell membrane. The enzyme catalyses (S)-dihydroorotate + a quinone = orotate + a quinol. Its pathway is pyrimidine metabolism; UMP biosynthesis via de novo pathway; orotate from (S)-dihydroorotate (quinone route): step 1/1. Its function is as follows. Catalyzes the conversion of dihydroorotate to orotate with quinone as electron acceptor. The polypeptide is Dihydroorotate dehydrogenase (quinone) (Rhodococcus erythropolis (strain PR4 / NBRC 100887)).